We begin with the raw amino-acid sequence, 1232 residues long: Histone-lysine N-methyltransferase MECOM (1232 aa).

The interval 22–68 (PEIPLEEMPDADADGITSVPSLHIQEPCSPATSSESFTPKEGSPYKA) is disordered. Residues 25–34 (PLEEMPDADA) are compositionally biased toward acidic residues. Residues 80 to 192 (DEFELRESTM…PGEELLLFMK (113 aa)) form the SET domain. Residues Lys-101 and Lys-192 each participate in a glycyl lysine isopeptide (Lys-Gly) (interchain with G-Cter in SUMO2) cross-link. The segment at 191–442 (MKSEEDPHEP…NHFAAGGFFG (252 aa)) is interaction with SUV39H1 and probably MAPK9 and SMAD3. 5 C2H2-type zinc fingers span residues 211-238 (HRCEDCDQLFESKAELADHQKFPCSTPH), 265-287 (QDCKECDRVFPDLQSLEKHMLSH), 293-315 (YKCDQCPKAFNWKSNLIRHQMSH), 321-344 (YECENCAKVFTDPSNLQRHIRSQH), and 350-372 (HACPECGKTFATSSGLKQHKHIH). Lys-294 participates in a covalent cross-link: Glycyl lysine isopeptide (Lys-Gly) (interchain with G-Cter in SUMO2). Glycyl lysine isopeptide (Lys-Gly) (interchain with G-Cter in SUMO2) cross-links involve residues Lys-369 and Lys-376. A C2H2-type 6 zinc finger spans residues 378–400 (FICEVCHKSYTQFSNLCRHKRMH). A C2H2-type 7; atypical zinc finger spans residues 407–429 (IKCKDCGQMFSTTSSLNKHRRFC). Glycyl lysine isopeptide (Lys-Gly) (interchain with G-Cter in SUMO2) cross-links involve residues Lys-432, Lys-525, Lys-545, Lys-549, and Lys-557. Residues 548 to 622 (SKHPPVGDNK…KCKENGKMFK (75 aa)) are disordered. Residues 562 to 577 (LPERSSEERPLEKISD) show a composition bias toward basic and acidic residues. Residues 588-600 (STPSGSDLETTSG) are compositionally biased toward polar residues. A compositionally biased stretch (basic and acidic residues) spans 608-622 (ESDKEKCKENGKMFK). The Nuclear localization signal signature appears at 611 to 624 (KEKCKENGKMFKDK). A Glycyl lysine isopeptide (Lys-Gly) (interchain with G-Cter in SUMO2) cross-link involves residue Lys-624. Ser-626 carries the phosphoserine modification. Glycyl lysine isopeptide (Lys-Gly) (interchain with G-Cter in SUMO2) cross-links involve residues Lys-637, Lys-665, Lys-687, and Lys-723. The disordered stretch occupies residues 720-823 (LPLKMEPQSP…DGSLQHARPT (104 aa)). Ser-728 carries the post-translational modification Phosphoserine. Glycyl lysine isopeptide (Lys-Gly) (interchain with G-Cter in SUMO2) cross-links involve residues Lys-733, Lys-734, and Lys-737. Ser-742 bears the Phosphoserine mark. Residues 743–747 (PFDLT) carry the CTBP-binding motif 1 motif. Glycyl lysine isopeptide (Lys-Gly) (interchain with G-Cter in SUMO2) cross-links involve residues Lys-751, Lys-754, and Lys-762. Positions 758–773 (SGPSKPSGTPATSQDQ) are enriched in polar residues. Positions 774–778 (PLDLS) match the CTBP-binding motif 2 motif. Residues Lys-789, Lys-802, and Lys-803 each participate in a glycyl lysine isopeptide (Lys-Gly) (interchain with G-Cter in SUMO2) cross-link. The segment covering 791–805 (TEPRKNHVFGEKKGS) has biased composition (basic and acidic residues). Over residues 806-816 (NMDTRPSSDGS) the composition is skewed to polar residues. Residues Lys-837, Lys-846, Lys-848, and Lys-879 each participate in a glycyl lysine isopeptide (Lys-Gly) (interchain with G-Cter in SUMO2) cross-link. C2H2-type zinc fingers lie at residues 914–936 (YTCRYCGKIFPRSANLTRHLRTH), 942–965 (YRCKYCDRSFSISSNLQRHVRNIH), and 971–993 (FKCHLCDRCFGQQTNLDRHLKKH). Lys-1020 is covalently cross-linked (Glycyl lysine isopeptide (Lys-Gly) (interchain with G-Cter in SUMO2)). Residues 1032–1043 (IGNSNHGSQSPR) are compositionally biased toward polar residues. The segment at 1032 to 1107 (IGNSNHGSQS…GVTRLDEEIP (76 aa)) is disordered. A phosphoserine mark is found at Ser-1039 and Ser-1041. The span at 1044-1059 (NMEERMNGSHFKDKKA) shows a compositional bias: basic and acidic residues. Glycyl lysine isopeptide (Lys-Gly) (interchain with G-Cter in SUMO2) cross-links involve residues Lys-1055 and Lys-1058. Residues 1068–1088 (LLDDEEVEDEVLLDEEDEDND) are compositionally biased toward acidic residues. Residues 1089–1104 (IPGKPRKELGVTRLDE) show a composition bias toward basic and acidic residues. Residues Lys-1122, Lys-1129, Lys-1134, Lys-1151, Lys-1178, and Lys-1186 each participate in a glycyl lysine isopeptide (Lys-Gly) (interchain with G-Cter in SUMO2) cross-link.

In terms of assembly, homooligomer. Interacts with CTBP1. Interacts with SMAD3 (via MH2 domain); the interaction is direct. Interacts with SMAD4; through interaction with SMAD3. Interacts with CREBBP, KAT2B and histone deacetylases. Interacts with MAPK8 and MAPK9; inhibits JNK signaling. Interacts with SUV39H1 (via SET domain); enhances MECOM transcriptional repression activity. In terms of processing, may be acetylated by CREBBP and KAT2B.

It localises to the nucleus. It is found in the nucleus speckle. Its subcellular location is the cytoplasm. The catalysed reaction is L-lysyl(9)-[histone H3] + S-adenosyl-L-methionine = N(6)-methyl-L-lysyl(9)-[histone H3] + S-adenosyl-L-homocysteine + H(+). Its function is as follows. Functions as a transcriptional regulator binding to DNA sequences in the promoter region of target genes and regulating positively or negatively their expression. Oncogene which plays a role in development, cell proliferation and differentiation. May also play a role in apoptosis through regulation of the JNK and TGF-beta signaling. Involved in hematopoiesis. Functionally, displays histone methyltransferase activity and monomethylates 'Lys-9' of histone H3 (H3K9me1) in vitro. Probably catalyzes the monomethylation of free histone H3 in the cytoplasm which is then transported to the nucleus and incorporated into nucleosomes where SUV39H methyltransferases use it as a substrate to catalyze histone H3 'Lys-9' trimethylation. Likely to be one of the primary histone methyltransferases along with PRDM16 that direct cytoplasmic H3K9me1 methylation. This is Histone-lysine N-methyltransferase MECOM from Mus musculus (Mouse).